Reading from the N-terminus, the 106-residue chain is uncharacterized protein (106 aa).

Residues 28 to 68 are disordered; it reads SSANEPKKLPNKKLVSTKSHTQVNREKSKNKDTYEDYSDSN. Residues 50-61 are compositionally biased toward basic and acidic residues; the sequence is VNREKSKNKDTY.

This is an uncharacterized protein from Acanthamoeba polyphaga (Amoeba).